A 366-amino-acid polypeptide reads, in one-letter code: Ferredoxin--NADP reductase, leaf isozyme 2, chloroplastic (366 aa).

A chloroplast-targeting transit peptide spans 1 to 48; that stretch reads MAAVNTVSSLPCSKAGAAVAGGAPRPSTCSVFYPPRCWSKRSSGNGVR. The FAD-binding FR-type domain maps to 87–209; the sequence is KEPYTGRCLL…TGPVGKEMLM (123 aa). FAD contacts are provided by residues 145-148, 166-168, Tyr172, and 183-185; these read RLYS, CVK, and VCS. NADP(+) is bound by residues Ser148 and Lys168. Residues Cys184 and Cys189 are joined by a disulfide bond. Ser185 is modified (phosphoserine). Phosphothreonine is present on Thr216. Residue Thr224 participates in FAD binding. NADP(+)-binding positions include Thr224, 256–257, 286–287, Lys296, 325–326, and Glu364; these read VP, SR, and GL.

The protein belongs to the ferredoxin--NADP reductase type 1 family. In terms of assembly, heterodimer with LFNR1. Component of high molecular weight thylakoid LFNRs-containing protein complexes containing LIR1, LFNR1, LFNR2, TIC62 and TROL proteins. Interacts directly with LFNR1 and LFNR2; LIR1 increases the affinity of LFNR1 and LFNR2 for TIC62 and subsequent thylakoid relocalization. Requires FAD as cofactor. In terms of processing, may form interchain disulfide bonds with LIR1.

It is found in the plastid. It localises to the chloroplast stroma. The protein resides in the chloroplast thylakoid membrane. It catalyses the reaction 2 reduced [2Fe-2S]-[ferredoxin] + NADP(+) + H(+) = 2 oxidized [2Fe-2S]-[ferredoxin] + NADPH. It functions in the pathway energy metabolism; photosynthesis. Plays a key role in regulating the relative amounts of cyclic and non-cyclic electron flow to meet the demands of the plant for ATP and reducing power. This chain is Ferredoxin--NADP reductase, leaf isozyme 2, chloroplastic, found in Oryza sativa subsp. indica (Rice).